Consider the following 157-residue polypeptide: Transcription elongation factor GreA (157 aa).

The disordered stretch occupies residues 1-60 (MEKVPMTSAGFAALGEELKKRQSEDRPRIIEHIAEARSHGDLSENAEYHAAKEEQSHNEG). Residues 16 to 60 (EELKKRQSEDRPRIIEHIAEARSHGDLSENAEYHAAKEEQSHNEG) show a composition bias toward basic and acidic residues. The stretch at 46-73 (AEYHAAKEEQSHNEGRIAELEDKLARAD) forms a coiled coil.

It belongs to the GreA/GreB family.

Functionally, necessary for efficient RNA polymerase transcription elongation past template-encoded arresting sites. The arresting sites in DNA have the property of trapping a certain fraction of elongating RNA polymerases that pass through, resulting in locked ternary complexes. Cleavage of the nascent transcript by cleavage factors such as GreA or GreB allows the resumption of elongation from the new 3'terminus. GreA releases sequences of 2 to 3 nucleotides. This chain is Transcription elongation factor GreA, found in Bradyrhizobium diazoefficiens (strain JCM 10833 / BCRC 13528 / IAM 13628 / NBRC 14792 / USDA 110).